A 341-amino-acid chain; its full sequence is Inactive caspase-12 (341 aa).

Residues 1–92 enclose the CARD domain; it reads MADEKPSNGV…QLSSDISSDG (92 aa). A phosphoserine mark is found at serine 85 and serine 90. Catalysis depends on residues histidine 172 and cysteine 220.

It belongs to the peptidase C14A family. In terms of tissue distribution, widely expressed, with highest levels in lung.

May function as a negative regulator of inflammatory responses and innate immunity. May reduce cytokine release in response to bacterial lipopolysaccharide during infection. Reduces activation of NF-kappa-B in response to TNF. May lack protease activity. The polypeptide is Inactive caspase-12 (CASP12) (Homo sapiens (Human)).